The primary structure comprises 137 residues: Methylglyoxal synthase (137 aa).

Residues 1–137 (MKIALIAHDK…DLLRGEEPNV (137 aa)) form the MGS-like domain. Residues H8, K12, 34–37 (TGTT), and 54–55 (SG) each bind substrate. Catalysis depends on D60, which acts as the Proton donor/acceptor. Residue H87 participates in substrate binding.

The protein belongs to the methylglyoxal synthase family.

It catalyses the reaction dihydroxyacetone phosphate = methylglyoxal + phosphate. Functionally, catalyzes the formation of methylglyoxal from dihydroxyacetone phosphate. This Bacillus subtilis (strain 168) protein is Methylglyoxal synthase.